The following is a 302-amino-acid chain: Bifunctional phosphoglucose/phosphomannose isomerase (302 aa).

Residues V27–P160 form the SIS domain. D-fructose 6-phosphate contacts are provided by G47, S48, S87, S89, T92, and R135. Residues G47, S48, S87, S89, T92, and R135 each coordinate D-glucose 6-phosphate. E203 (proton acceptor) is an active-site residue. The D-fructose 6-phosphate site is built by H219 and K298. D-glucose 6-phosphate is bound by residues H219 and K298. H219 acts as the Proton donor in catalysis. The active-site Proton acceptor is K298.

Belongs to the PGI/PMI family. As to quaternary structure, homodimer.

Its subcellular location is the cytoplasm. It catalyses the reaction alpha-D-glucose 6-phosphate = beta-D-fructose 6-phosphate. It carries out the reaction D-mannose 6-phosphate = D-fructose 6-phosphate. With respect to regulation, inhibited by 5-phosphoarabinonate (PAB) and 6-phosphogluconate. Dual specificity isomerase that catalyzes the isomerization of both glucose-6-phosphate and mannose-6-phosphate to fructose-6-phosphate with similar catalytic efficiency. The protein is Bifunctional phosphoglucose/phosphomannose isomerase of Pyrobaculum aerophilum (strain ATCC 51768 / DSM 7523 / JCM 9630 / CIP 104966 / NBRC 100827 / IM2).